The primary structure comprises 500 residues: Plexin domain-containing protein 1 (500 aa).

The N-terminal stretch at 1–18 (MRGELWLLVLVLREAARA) is a signal peptide. Residues 19–426 (LSPQPGAGHD…TKGTPVHLGT (408 aa)) are Extracellular-facing. 2 disordered regions span residues 20–39 (SPQPGAGHDEGPGSGWAAKG) and 46–78 (RRARESPGHVSEPDRTQLSQDLGGGTLAMDTLP). Serine 33 carries O-linked (Xyl...) (chondroitin sulfate) serine glycosylation. The span at 47-60 (RARESPGHVSEPDR) shows a compositional bias: basic and acidic residues. N-linked (GlcNAc...) asparagine glycans are attached at residues asparagine 80 and asparagine 197. The interval 359–379 (FQDEDHDSASPDTSFSPYDGD) is disordered. Residues 368–379 (SPDTSFSPYDGD) show a composition bias toward polar residues. The helical transmembrane segment at 427–447 (IVGIVLAVLLVAAIILAGIYI) threads the bilayer. The Cytoplasmic segment spans residues 448 to 500 (NGHPTSNAALFFIERRPHHWPAMKFRSHPDHSTYAEVEPSGHEKEGFMEAEQC). A compositionally biased stretch (basic and acidic residues) spans 479 to 494 (STYAEVEPSGHEKEGF). The disordered stretch occupies residues 479-500 (STYAEVEPSGHEKEGFMEAEQC).

Belongs to the plexin family. In terms of assembly, interacts with NID1. May interact with CTTN. In terms of processing, N-glycosylated. Detected in urine (at protein level). Detected in endothelial cells from colorectal cancer, and in endothelial cells from primary cancers of the lung, liver, pancreas, breast and brain. Not detectable in endothelial cells from normal tissue. Expressed in fibrovascular membrane with increased expression in individuals with proliferative diabetic retinopathy.

The protein localises to the secreted. It is found in the cell membrane. Its subcellular location is the cell junction. It localises to the tight junction. The protein resides in the cytoplasm. Functionally, plays a critical role in endothelial cell capillary morphogenesis. The sequence is that of Plexin domain-containing protein 1 (PLXDC1) from Homo sapiens (Human).